The primary structure comprises 727 residues: Pentatricopeptide repeat-containing protein At4g20740 (727 aa).

Residues 1–84 (MKSPKPPNLS…PSPPSHSTVI (84 aa)) are disordered. Over residues 38–56 (SNRQSIPRVSPQPQSNSLA) the composition is skewed to polar residues. The segment covering 59 to 70 (TPFDLRKWDPET) has biased composition (basic and acidic residues). PPR repeat units lie at residues 157 to 191 (DFAA…GRPP), 192 to 226 (SEKQ…GFKP), 227 to 261 (RVFL…GLVE), 262 to 296 (ESTT…LCKP), 297 to 331 (DVFA…EIKP), 332 to 366 (DVMA…QILI), 367 to 401 (DREI…GYIA), 402 to 436 (DIGI…ELEP), 437 to 471 (DFET…GYPV), 506 to 540 (SVSV…GFEP), 541 to 575 (DSSS…SCVP), 576 to 606 (SIAA…CLGN), 612 to 646 (MEFK…GVFI), and 647 to 681 (NEVI…KVMT).

Belongs to the PPR family. P subfamily.

This is Pentatricopeptide repeat-containing protein At4g20740 from Arabidopsis thaliana (Mouse-ear cress).